The chain runs to 40 residues: Meleagrin (40 aa).

Residue glutamine 1 is modified to Pyrrolidone carboxylic acid. Cystine bridges form between cysteine 6/cysteine 33, cysteine 12/cysteine 28, and cysteine 16/cysteine 32.

It belongs to the transferrin family.

This is Meleagrin from Meleagris gallopavo (Wild turkey).